The primary structure comprises 257 residues: Large ribosomal subunit protein uL2 (257 aa).

The tract at residues valine 207 to alanine 231 is disordered.

This sequence belongs to the universal ribosomal protein uL2 family. In terms of assembly, component of the large ribosomal subunit.

The protein localises to the cytoplasm. Its function is as follows. Component of the large ribosomal subunit. The ribosome is a large ribonucleoprotein complex responsible for the synthesis of proteins in the cell. The polypeptide is Large ribosomal subunit protein uL2 (rpl8) (Xenopus laevis (African clawed frog)).